The following is a 413-amino-acid chain: Methylaspartate ammonia-lyase (413 aa).

Q172 serves as a coordination point for (2S,3S)-3-methyl-L-aspartate. Residues D238, E273, and D307 each contribute to the Mg(2+) site. Q329 serves as a coordination point for (2S,3S)-3-methyl-L-aspartate. K331 acts as the Proton acceptor in catalysis. (2S,3S)-3-methyl-L-aspartate contacts are provided by residues 360-361 (TC) and C361.

Belongs to the methylaspartate ammonia-lyase family. As to quaternary structure, homodimer. Requires Mg(2+) as cofactor.

The catalysed reaction is (2S,3S)-3-methyl-L-aspartate = mesaconate + NH4(+). It participates in amino-acid degradation; L-glutamate degradation via mesaconate pathway; acetate and pyruvate from L-glutamate: step 2/4. Its activity is regulated as follows. Inhibited by calcium ions. Involved in the methylaspartate cycle. Catalyzes the formation of the alpha,beta-unsaturated bond by the reversible anti elimination of ammonia from L-threo-beta-methylaspartate (L-threo-(2S,3S)-3-methylaspartate) to give mesaconate. It can also use L-erythro-beta-methylaspartate (L-erythro-(2S,3R)-3-methylaspartate), L-aspartate, fumarate and ethylfumarate as substrates. In Clostridium tetanomorphum, this protein is Methylaspartate ammonia-lyase.